We begin with the raw amino-acid sequence, 310 residues long: Glycine--tRNA ligase alpha subunit (310 aa).

The protein belongs to the class-II aminoacyl-tRNA synthetase family. In terms of assembly, tetramer of two alpha and two beta subunits.

Its subcellular location is the cytoplasm. It carries out the reaction tRNA(Gly) + glycine + ATP = glycyl-tRNA(Gly) + AMP + diphosphate. The polypeptide is Glycine--tRNA ligase alpha subunit (Agrobacterium fabrum (strain C58 / ATCC 33970) (Agrobacterium tumefaciens (strain C58))).